A 370-amino-acid polypeptide reads, in one-letter code: Cytochrome b (370 aa).

The next 4 membrane-spanning stretches (helical) occupy residues 25–45, 69–90, 105–125, and 170–190; these read FGSMLLACSTLQVLTGFFLAV, WLMQNLHAIGASMFFICIYIHI, WLSGTTLLIMLMATAFFGYVL, and FFALHFILPFGIISLSSLHIL. Positions 75 and 89 each coordinate heme b. Positions 174 and 188 each coordinate heme b. An a ubiquinone-binding site is contributed by H193. Helical transmembrane passes span 218–238, 280–300, 312–332, and 339–358; these read YKDLLMLAMLTTLLLMIVSFF, LGGALALTMSIMILLTVPFTH, LMQLMFWTFAATFLVISWSST, and FTTISQAAALMYFLFFISKP.

This sequence belongs to the cytochrome b family. The cytochrome bc1 complex contains 3 respiratory subunits (MT-CYB, CYC1 and UQCRFS1), 2 core proteins (UQCRC1 and UQCRC2) and probably 6 low-molecular weight proteins. The cofactor is heme b.

The protein localises to the mitochondrion inner membrane. Component of the ubiquinol-cytochrome c reductase complex (complex III or cytochrome b-c1 complex) that is part of the mitochondrial respiratory chain. The b-c1 complex mediates electron transfer from ubiquinol to cytochrome c. Contributes to the generation of a proton gradient across the mitochondrial membrane that is then used for ATP synthesis. The chain is Cytochrome b (MT-CYB) from Chilabothrus subflavus (Jamaican yellow boa).